We begin with the raw amino-acid sequence, 457 residues long: UDP-glycosyltransferase 74C1 (457 aa).

Residues Thr-281, Val-336–Gln-338, His-353–Glu-361, and Trp-375–Gln-378 each bind UDP-alpha-D-glucose.

Belongs to the UDP-glycosyltransferase family.

The chain is UDP-glycosyltransferase 74C1 (UGT74C1) from Arabidopsis thaliana (Mouse-ear cress).